Reading from the N-terminus, the 598-residue chain is Probable translation initiation factor IF-2 (598 aa).

A tr-type G domain is found at 3–225; sequence LRCPIVSVLG…GLAQKFLEQK (223 aa). Positions 12–19 are G1; it reads GHVDHGKT. 12 to 19 provides a ligand contact to GTP; it reads GHVDHGKT. The tract at residues 37–41 is G2; sequence GITQH. The tract at residues 76–79 is G3; sequence DTPG. Residues 76-80 and 130-133 each bind GTP; these read DTPGH and NKLD. The interval 130–133 is G4; it reads NKLD. The tract at residues 200–202 is G5; the sequence is SAI.

The protein belongs to the TRAFAC class translation factor GTPase superfamily. Classic translation factor GTPase family. IF-2 subfamily.

Functionally, function in general translation initiation by promoting the binding of the formylmethionine-tRNA to ribosomes. Seems to function along with eIF-2. This Methanococcus vannielii (strain ATCC 35089 / DSM 1224 / JCM 13029 / OCM 148 / SB) protein is Probable translation initiation factor IF-2.